Consider the following 414-residue polypeptide: ORC1-type DNA replication protein 1 (414 aa).

ATP is bound by residues 70–74, tyrosine 213, and arginine 225; that span reads TGKTA.

It belongs to the CDC6/cdc18 family.

Involved in regulation of DNA replication. This is ORC1-type DNA replication protein 1 (cdc6-1) from Methanosarcina mazei (strain ATCC BAA-159 / DSM 3647 / Goe1 / Go1 / JCM 11833 / OCM 88) (Methanosarcina frisia).